A 66-amino-acid chain; its full sequence is Large ribosomal subunit protein uL29 (66 aa).

It belongs to the universal ribosomal protein uL29 family.

The protein is Large ribosomal subunit protein uL29 of Thermotoga neapolitana (strain ATCC 49049 / DSM 4359 / NBRC 107923 / NS-E).